The sequence spans 102 residues: Small ribosomal subunit protein uS10 (102 aa).

This sequence belongs to the universal ribosomal protein uS10 family. Part of the 30S ribosomal subunit.

In terms of biological role, involved in the binding of tRNA to the ribosomes. This Nitrosopumilus maritimus (strain SCM1) protein is Small ribosomal subunit protein uS10.